We begin with the raw amino-acid sequence, 256 residues long: Thiazole synthase (256 aa).

K96 (schiff-base intermediate with DXP) is an active-site residue. Residues G157, 184 to 185 (AG), and 206 to 207 (NT) contribute to the 1-deoxy-D-xylulose 5-phosphate site.

Belongs to the ThiG family. As to quaternary structure, homotetramer. Forms heterodimers with either ThiH or ThiS.

Its subcellular location is the cytoplasm. The enzyme catalyses [ThiS sulfur-carrier protein]-C-terminal-Gly-aminoethanethioate + 2-iminoacetate + 1-deoxy-D-xylulose 5-phosphate = [ThiS sulfur-carrier protein]-C-terminal Gly-Gly + 2-[(2R,5Z)-2-carboxy-4-methylthiazol-5(2H)-ylidene]ethyl phosphate + 2 H2O + H(+). Its pathway is cofactor biosynthesis; thiamine diphosphate biosynthesis. Catalyzes the rearrangement of 1-deoxy-D-xylulose 5-phosphate (DXP) to produce the thiazole phosphate moiety of thiamine. Sulfur is provided by the thiocarboxylate moiety of the carrier protein ThiS. In vitro, sulfur can be provided by H(2)S. This is Thiazole synthase from Bartonella tribocorum (strain CIP 105476 / IBS 506).